Here is a 508-residue protein sequence, read N- to C-terminus: UTP--glucose-1-phosphate uridylyltransferase (508 aa).

Ser2 carries the N-acetylserine modification. 2 positions are modified to phosphoserine: Ser2 and Ser13. UTP contacts are provided by residues 113 to 116 (LNGG), Lys127, Gln190, and Gly222. 115-116 (GG) is a binding site for substrate. Lys127 is a Mg(2+) binding site. Substrate-binding positions include His223, 251-253 (NID), and Asn330. A UTP-binding site is contributed by Asp253. Asp253 is a binding site for Mg(2+). Lys396 is a UTP binding site. The active site involves Lys396. Thr426 carries the phosphothreonine modification. The residue at position 434 (Ser434) is a Phosphoserine. An N6-acetyllysine modification is found at Lys438. Residues Ser448 and Ser461 each carry the phosphoserine modification. Residues 457–508 (HLTVSGDVTFGKNVSLKGTVIIIANHGDRIDIPPGAVLENKIVSGNLRILDH) are oligomerization. The tract at residues 502-503 (NL) is critical for end-to-end subunit interaction.

It belongs to the UDPGP type 1 family. In terms of assembly, homooctamer. In terms of tissue distribution, highly expressed in various brain regions. Expressed in amygdala, anterior cingulate cortex, caudate, cerebellar hemisphere, cerebellum, cortex, frontal cortex, hippocampus, hypothalamus, nucleus accumbens, putamen, spinal cord and substantia nigra. Also widely expressed among other tissues, including liver, heart, placenta, lung, kidney, pancreas and skeletal muscle.

It localises to the cytoplasm. The enzyme catalyses alpha-D-glucose 1-phosphate + UTP + H(+) = UDP-alpha-D-glucose + diphosphate. It participates in glycan biosynthesis; glycogen biosynthesis. In terms of biological role, UTP--glucose-1-phosphate uridylyltransferase catalyzing the conversion of glucose-1-phosphate into UDP-glucose, a crucial precursor for the production of glycogen. The polypeptide is UTP--glucose-1-phosphate uridylyltransferase (Homo sapiens (Human)).